The sequence spans 416 residues: Probable sarcosine oxidase (416 aa).

10–40 contacts FAD; the sequence is DVIVVGAGVMGSSAAYQLAKRGQKTLLLEQF. At cysteine 325 the chain carries S-8alpha-FAD cysteine.

The protein belongs to the MSOX/MTOX family. It depends on FAD as a cofactor.

The catalysed reaction is sarcosine + O2 + H2O = formaldehyde + glycine + H2O2. The protein is Probable sarcosine oxidase of Arabidopsis thaliana (Mouse-ear cress).